A 2344-amino-acid chain; its full sequence is MGSQTLQILRQGVWAALSGGWYYDPHQATFVNALHLYLWLFLLGLPFTLYMALPSSMIIVAVYCPVVAAVFIILKMVNYRLHRALDAGEIVDRSAKEFTDQRAKAEQGNCSTRRKDSNGPSDPGGGIEMSEFIREATPPVGCSSRNSYAGLDPSNQIGSGSSRLGTAATIKGDTDTAKTSDDISLSLGQSSSLCKEGSEEQDLATDRKLFRLVSNDSFISIQPSLSSCGQDLPRDFSDKVSLPSHSQHHRVDQSLCSACDTEVASLVPLHSHSYRKEHRPRGVPRTSSSAVAFPDASLSGLPLYQQQQRRGLDPVTELDSSKPHSGTRESSAGKSCPPAQSQPAADRRKSSSQPPTKCGKSRALNAEKSVDSLRSLSTRSSGSTESYCSGTDRDTNSTLSSYKSEQTSSTHIESILSEHEESPKVGDKSARKRECGADSVEERSHRADDRRTSSDKTAPEGNTPAGPPEAPDAQASEEMADQAAPSSSASEDANKNPHANEFTVPGDRPPEQSAESKEEQSEKPSLATDSRVCKDDGGKQKEGDVRPKSSSLIHRTTSAHKPGRRRTGKKRASSFDSSRHRDYVSFRGVSGTKPHSAVFGHDEDSSDQSDLSRAPSIHSAHQFSSDSSSSATSHSCQSPEGKYGALKTKHGHRDRGTDSDHTHRAHPGPEGTTKKRASRRTSSTSSAKTRARVLSLDSGTVACLNDSNRLLAPDSMKPLTTSKSDLEAKEGEVLDELSLLGRASQLETVTRSRNSLPSQVAFPEGEEQDAATGAAQASEEAVAFRRERSTFRRQAVRRRHNAGSNPTPPTLLIGSPLSLQDGQQGQQSTAQVKVQSRPPSQAAVLSASASLLVRKGSVHLEASHDHASAVGGSSLHDELGKFSSTLYETGGCDMSLVNFEPAARRASNICDTDSHVSSSTSVRFYPHDMLSLPQIRLNRLLTIDTDLLEQQDIDLSPDLAATYGPTEEAAQKVKHYYRFWVLPQLWIGINFDRLTLLALFDRNREILENILAVVLAILVAFLGSILLIQGFFRDIWVFQFCLVIASCQYSLLKSVQPDSSSPRHGHNRIIAYSRPVYFCLCCGLIWLLDYGSRNLTTSKFKLYGVTFTNPLVLLSARDLVIVFTLCFPIVFFIGLLPQVNTFVMYLCEQLDIHIFGGNATTSLLAALYSFLCSIVAVALLYGLCYGALRDSWDGQHVPVLFSVFCGLLVAVSYHLSRQSSDPSVLFSLMQSKIFPKADEKNPEDPLSEVKDPLPEKLSNSVSERLQSDLVVCVIIGVLYFAIHVSTVFTALQPALKYVLYALVGVVGLVTHYVLPQVRKQLPWHCFSRPLLRTAEHSQYEVRNAATMMWFEKLHVWLLFVEKNIIYPLIVLNELSSSAETIASPKKLDTELGALMITIAGLKLLRSSFSSPTYQYITVIFTVLFFKFDYEAFSETMLLDLFFMSILFSKLWELLYKLQFVYTYVAPWQITWGSAFHAFAQPFAVPHSAMLFVQAIVSAFFSTPLNPFLGSAIFITSYVRPVKFWERDYNTKRVDHSNTRLASQLDRNPGSDDNNLNSIFYEHLTRSLQHSLCGDLLLGRWGNYSTGDCFILASDYLNALVHLIEIGNGLVTFQLRGLEFRGTYCQQREVEAITEGVEEDEGFCCCEPGHVPHVLSFNAAFGQRWLAWEVVVTKYILEGYSITDNSAASMLQVFDLRRVLTTYYVKGIIYYVTTSSKLEEWLANETMQEGLRLCADRNYVDVDPTFNPNIDEDYDHRLAGISRESFCVIYLSWIEYCSSRRAKPLDVDKDSSLVTLCYGLCVLGRRALGTASHHMSSNLESFLYGLHALFKGDFRISSVRDEWIFADMELLRKVVVPGIRMSIKLHQDHFTSPDEYDDPTVLYEAIVSHEKNLVIAHEGDPAWRSAVLANSPSLLALRHVMDDGTNEYKIIMLNRRYLSFRVIKVNKECVRGLWAGQQQELVFLRNRNPERGSIQNAKQALRNMINSSCDQPIGYPIFVSPLTTSYSDSHDQLKEILGGPISLGNIRNFIVSTWHRLRKGCGAGCNSGGNIEDSDTGGGTSCPGNSAVTASDPHNNVSQGSTGHPGQGAGSGLHPPTTSYPPTLGTSHSAHSVQSSLVRQSPARASMASQSSYCYSSRHSSLRMSTTGFVPCRRSSTSQISLRNLPSSIQSRLSMVNQMEAASQGGMGCVQHGLPSSSSSSQSIPACKHHTLVAFLGAEGGQGSATEAQPGNTSSPANISHARKGEVIYRVQIVDLSQILEGINVSKRKELHWPDEGIRLKAGRNSWKDWSPQEGMEGHVVHRWVPCSRDPSTRSHIDKTVLLVQIDDKYVTIIETGVLELGAEV.

Helical transmembrane passes span 33–53 (ALHLYLWLFLLGLPFTLYMAL) and 57–77 (MIIVAVYCPVVAAVFIILKMV). Disordered stretches follow at residues 101 to 163 (QRAK…GSSR), 271 to 290 (SHSYRKEHRPRGVPRTSSSA), 306 to 692 (QQQR…TRAR), and 749 to 837 (VTRS…VQSR). Positions 143-163 (SSRNSYAGLDPSNQIGSGSSR) are enriched in polar residues. The segment covering 272 to 282 (HSYRKEHRPRG) has biased composition (basic residues). Residues 328 to 343 (RESSAGKSCPPAQSQP) show a composition bias toward polar residues. Positions 372–390 (SLRSLSTRSSGSTESYCSG) are enriched in low complexity. The segment covering 396-406 (NSTLSSYKSEQ) has biased composition (polar residues). Composition is skewed to basic and acidic residues over residues 416–458 (LSEH…DKTA), 508–522 (RPPEQSAESKEEQSE), and 531–547 (RVCKDDGGKQKEGDVRP). Basic residues predominate over residues 557–572 (TSAHKPGRRRTGKKRA). Positions 616-638 (SIHSAHQFSSDSSSSATSHSCQS) are enriched in low complexity. Residues 749 to 758 (VTRSRNSLPS) are compositionally biased toward polar residues. 2 stretches are compositionally biased toward low complexity: residues 770–781 (AATGAAQASEEA) and 817–835 (LSLQDGQQGQQSTAQVKVQ). A run of 3 helical transmembrane segments spans residues 1010-1030 (ILAVVLAILVAFLGSILLIQG), 1035-1055 (IWVFQFCLVIASCQYSLLKSV), and 1069-1089 (IIAYSRPVYFCLCCGLIWLLD). N1094 is a glycosylation site (N-linked (GlcNAc...) asparagine). A helical membrane pass occupies residues 1119–1139 (LVIVFTLCFPIVFFIGLLPQV). N1158 carries an N-linked (GlcNAc...) asparagine glycan. Helical transmembrane passes span 1163-1183 (LLAALYSFLCSIVAVALLYGL), 1196-1216 (HVPVLFSVFCGLLVAVSYHLS), 1269-1289 (LVVCVIIGVLYFAIHVSTVFT), and 1297-1317 (YVLYALVGVVGLVTHYVLPQV). N-linked (GlcNAc...) asparagine glycans are attached at residues N1582, N1723, N1985, and N2075. The segment at 2051-2123 (EDSDTGGGTS…SSLVRQSPAR (73 aa)) is disordered. Polar residues-rich tracts occupy residues 2061–2081 (CPGNSAVTASDPHNNVSQGST) and 2095–2118 (PTTSYPPTLGTSHSAHSVQSSLVR). 3 N-linked (GlcNAc...) asparagine glycosylation sites follow: N2231, N2237, and N2263.

It belongs to the pecanex family.

It localises to the membrane. In Mus musculus (Mouse), this protein is Pecanex-like protein 1.